We begin with the raw amino-acid sequence, 420 residues long: Gamma-glutamyl phosphate reductase (420 aa).

Belongs to the gamma-glutamyl phosphate reductase family.

Its subcellular location is the cytoplasm. It catalyses the reaction L-glutamate 5-semialdehyde + phosphate + NADP(+) = L-glutamyl 5-phosphate + NADPH + H(+). The protein operates within amino-acid biosynthesis; L-proline biosynthesis; L-glutamate 5-semialdehyde from L-glutamate: step 2/2. In terms of biological role, catalyzes the NADPH-dependent reduction of L-glutamate 5-phosphate into L-glutamate 5-semialdehyde and phosphate. The product spontaneously undergoes cyclization to form 1-pyrroline-5-carboxylate. This chain is Gamma-glutamyl phosphate reductase, found in Shewanella amazonensis (strain ATCC BAA-1098 / SB2B).